Consider the following 218-residue polypeptide: UPF0177 protein YaiF (218 aa).

5 consecutive transmembrane segments (helical) span residues 8–28, 48–68, 81–101, 123–143, and 163–183; these read SIIIATAFFLFILSQLPAVFL, FIILTLVVVTICIFIGIKCGF, ILLIFSLLIITFFIQKFVVQF, ILSSLLFPGQFVAVSILAPIL, and FFLSCFFFSYVHSGFSWDILG.

Belongs to the UPF0177 family.

It is found in the cell membrane. This is UPF0177 protein YaiF (yaiF) from Lactococcus lactis subsp. lactis (strain IL1403) (Streptococcus lactis).